Reading from the N-terminus, the 433-residue chain is MWKLLANVVSNVVSQGWEVFVEVFVVSYRHIPSHTLSVPTDITVDKLNMLANKTLNNISDKEFESVAFDFLISSTILRTTLEEFVQENHVPVESVISIECIVQEPAPEPDSDIALLDWIGAIRCNDKFIASATYGGELVLWNHYGKKLTSSVLHEEAIKCLALLPDQKEDRIVTGGHDQVLMLSDVETHGSSTFIKPTCVLRGHERSVEAIAVNTDGTRTVSGGFDKMLKVWNTDKDDTSTVFEKTRSEKTGKKKRTDIITKIPMVTLSGHKDAIVSAVWSPNSAKEVLTVSWDHTISIWDLELAGQINTLAAKKAFTSISVCCSSGMLITGSVDPVVRLWDPRSHEGTLVKQSFIGHCGWISSVFWNKVKENLFISASFDKTVKMWDVRSNKTPLYDLVGHSDRILCCDWSVNELIVSGGVDCTMKTYRRKM.

The segment at 21 to 102 (VEVFVVSYRH…ESVISIECIV (82 aa)) is ubiquitin-like (UBL) domain. 7 WD repeats span residues 114–151 (ALLD…LTSS), 153–194 (LHEE…SSTF), 203–242 (GHER…TSTV), 270–310 (GHKD…QINT), 312–351 (AAKK…GTLV), 357–397 (GHCG…TPLY), and 401–433 (GHSD…RRKM).

This sequence belongs to the WD repeat WDR12/YTM1 family.

The protein resides in the nucleus. The protein localises to the nucleolus. It is found in the nucleoplasm. Required for maturation of ribosomal RNAs and formation of the large ribosomal subunit. In Brugia malayi (Filarial nematode worm), this protein is Ribosome biogenesis protein WDR12 homolog.